Reading from the N-terminus, the 25-residue chain is Antimicrobial peptide scolopin-2 (25 aa).

As to expression, expressed by the venom gland.

Its subcellular location is the secreted. Functionally, antimicrobial peptide against both Gram-positive, -negative and yeast. Also induces histamine release by mast cells and shows moderate hemolytic activities against both human and rabbit red cells. The chain is Antimicrobial peptide scolopin-2 from Scolopendra mutilans (Chinese red-headed centipede).